Here is a 103-residue protein sequence, read N- to C-terminus: Glycoprotein 24B (103 aa).

It belongs to the csb family. In terms of processing, O-glycosylated.

Its subcellular location is the cell surface. In terms of biological role, cell-cell adhesion during early development. The protein is Glycoprotein 24B (csbB) of Dictyostelium discoideum (Social amoeba).